Reading from the N-terminus, the 627-residue chain is 1-deoxy-D-xylulose-5-phosphate synthase (627 aa).

Residues His75 and 116–118 (AHS) each bind thiamine diphosphate. Asp147 lines the Mg(2+) pocket. Residues 148 to 149 (GA), Asn177, Tyr284, and Glu366 each bind thiamine diphosphate. Asn177 is a Mg(2+) binding site.

It belongs to the transketolase family. DXPS subfamily. As to quaternary structure, homodimer. It depends on Mg(2+) as a cofactor. Thiamine diphosphate is required as a cofactor.

The enzyme catalyses D-glyceraldehyde 3-phosphate + pyruvate + H(+) = 1-deoxy-D-xylulose 5-phosphate + CO2. It participates in metabolic intermediate biosynthesis; 1-deoxy-D-xylulose 5-phosphate biosynthesis; 1-deoxy-D-xylulose 5-phosphate from D-glyceraldehyde 3-phosphate and pyruvate: step 1/1. In terms of biological role, catalyzes the acyloin condensation reaction between C atoms 2 and 3 of pyruvate and glyceraldehyde 3-phosphate to yield 1-deoxy-D-xylulose-5-phosphate (DXP). This is 1-deoxy-D-xylulose-5-phosphate synthase from Bordetella petrii (strain ATCC BAA-461 / DSM 12804 / CCUG 43448).